The sequence spans 60 residues: Large ribosomal subunit protein uL30 (60 aa).

The protein belongs to the universal ribosomal protein uL30 family. As to quaternary structure, part of the 50S ribosomal subunit.

The polypeptide is Large ribosomal subunit protein uL30 (Flavobacterium johnsoniae (strain ATCC 17061 / DSM 2064 / JCM 8514 / BCRC 14874 / CCUG 350202 / NBRC 14942 / NCIMB 11054 / UW101) (Cytophaga johnsonae)).